We begin with the raw amino-acid sequence, 1287 residues long: DENN domain-containing protein 5A (1287 aa).

Residues 57-259 (STTEGENFEQ…EVPLPPPGRS (203 aa)) enclose the uDENN domain. Residue serine 193 is modified to Phosphoserine. The cDENN domain maps to 278 to 414 (ELPLFDFPVK…LEFVQEVSEI (137 aa)). Positions 416-598 (MAFGVPPEGN…IMCHDDDDKD (183 aa)) constitute a dDENN domain. Residues 787–950 (VEENTLIASL…DYFCFTNVFT (164 aa)) form the RUN 1 domain. Residues 954–1062 (IPYHILIVPS…DDGSLERVLV (109 aa)) enclose the PLAT domain. Phosphothreonine is present on threonine 1079. A phosphoserine mark is found at serine 1085, serine 1087, and serine 1096. Residues 1134–1280 (TLLLCGECGL…QEFNITLDTS (147 aa)) form the RUN 2 domain.

Belongs to the RAB6IP1 family. As to quaternary structure, interacts with RAB6A bound to GTP.

The protein resides in the golgi apparatus membrane. Functionally, guanine nucleotide exchange factor (GEF) which may activate RAB6A and RAB39A and/or RAB39B. Promotes the exchange of GDP to GTP, converting inactive GDP-bound Rab proteins into their active GTP-bound form. Involved in the negative regulation of neurite outgrowth. This is DENN domain-containing protein 5A (Dennd5a) from Mus musculus (Mouse).